We begin with the raw amino-acid sequence, 126 residues long: uncharacterized protein (126 aa).

Belongs to the SufE family.

This is an uncharacterized protein from Haemophilus influenzae (strain ATCC 51907 / DSM 11121 / KW20 / Rd).